The chain runs to 283 residues: SNAP25 homologous protein SNAP32 (283 aa).

Disordered regions lie at residues 1-64 (MSGR…AAAR) and 192-212 (LGLSDHPPQSNARQFHSEPTS). Residues 198–212 (PPQSNARQFHSEPTS) are compositionally biased toward polar residues. In terms of domain architecture, t-SNARE coiled-coil homology spans 218–280 (EMEKAKQDDG…KGANTRARRL (63 aa)).

Belongs to the SNAP-25 family. As to quaternary structure, interacts with SYP121. In terms of tissue distribution, expressed in roots, culms and leaves.

It localises to the membrane. Its function is as follows. t-SNARE involved in diverse vesicle trafficking and membrane fusion processes. May be involved in resistance to the rice blast fungus Magnaporthe oryzae. May contribute to host resistance to rice blast through interaction with SYP121. This is SNAP25 homologous protein SNAP32 from Oryza sativa subsp. japonica (Rice).